The following is a 252-amino-acid chain: Cilia- and flagella-associated protein 300 (252 aa).

The protein belongs to the CFAP300 family.

It is found in the cytoplasm. It localises to the cytoskeleton. The protein localises to the cilium axoneme. Cilium- and flagellum-specific protein that plays a role in axonemal structure organization and motility. Plays a role in outer and inner axonemal dynein arm assembly. The sequence is that of Cilia- and flagella-associated protein 300 from Paramecium tetraurelia.